A 231-amino-acid polypeptide reads, in one-letter code: CD302 antigen (231 aa).

Residues 1–21 (MSAAVVATLPTLLLLLGLAAA) form the signal peptide. Residues 22 to 169 (DCPSSSWVQF…YEKKYLPDHH (148 aa)) lie on the Extracellular side of the membrane. The region spanning 31 to 153 (FQSNCYIFLQ…CEVSSVEGAL (123 aa)) is the C-type lectin domain. N-linked (GlcNAc...) asparagine glycosylation is present at asparagine 110. A disulfide bond links cysteine 129 and cysteine 144. Residues 170 to 190 (ILITALVIASTTILTITGAVV) traverse the membrane as a helical segment. Topologically, residues 191–231 (WFLYKRNLTSGLTNTAYTTAPQLPYNDDCILVDAEENEYVA) are cytoplasmic.

It is found in the membrane. Its subcellular location is the cell projection. It localises to the filopodium. The protein resides in the cytoplasm. The protein localises to the cell cortex. It is found in the microvillus. In terms of biological role, potential multifunctional C-type lectin receptor that may play roles in endocytosis and phagocytosis as well as in cell adhesion and migration. The polypeptide is CD302 antigen (Trichosurus vulpecula (Brush-tailed possum)).